A 261-amino-acid polypeptide reads, in one-letter code: Small ribosomal subunit protein uS2 (261 aa).

It belongs to the universal ribosomal protein uS2 family.

The sequence is that of Small ribosomal subunit protein uS2 from Enterococcus faecalis (strain ATCC 700802 / V583).